Reading from the N-terminus, the 321-residue chain is Biotin synthase (321 aa).

Positions 37–264 (RDMELCTLSS…TSVIRLSAGR (228 aa)) constitute a Radical SAM core domain. 3 residues coordinate [4Fe-4S] cluster: C52, C56, and C59. Residues C96, C127, C187, and R259 each contribute to the [2Fe-2S] cluster site.

The protein belongs to the radical SAM superfamily. Biotin synthase family. As to quaternary structure, homodimer. The cofactor is [4Fe-4S] cluster. It depends on [2Fe-2S] cluster as a cofactor.

It catalyses the reaction (4R,5S)-dethiobiotin + (sulfur carrier)-SH + 2 reduced [2Fe-2S]-[ferredoxin] + 2 S-adenosyl-L-methionine = (sulfur carrier)-H + biotin + 2 5'-deoxyadenosine + 2 L-methionine + 2 oxidized [2Fe-2S]-[ferredoxin]. The protein operates within cofactor biosynthesis; biotin biosynthesis; biotin from 7,8-diaminononanoate: step 2/2. Catalyzes the conversion of dethiobiotin (DTB) to biotin by the insertion of a sulfur atom into dethiobiotin via a radical-based mechanism. The polypeptide is Biotin synthase (Coxiella burnetii (strain CbuK_Q154) (Coxiella burnetii (strain Q154))).